A 184-amino-acid polypeptide reads, in one-letter code: Transposon Tn917 resolvase (184 aa).

The Resolvase/invertase-type recombinase catalytic domain maps to 1–134 (MIFGYARVST…SGLKAARVRG (134 aa)). S9 acts as the O-(5'-phospho-DNA)-serine intermediate in catalysis. A DNA-binding region (H-T-H motif) is located at residues 161-180 (IRQILDASKLSKTTFYRYLN).

The protein belongs to the site-specific recombinase resolvase family.

Its function is as follows. Resolvase catalyzes the resolution (a site-specific recombination) of the cointegrated replicon to yield the final transposition products. This chain is Transposon Tn917 resolvase (tnpR), found in Enterococcus faecalis (Streptococcus faecalis).